A 404-amino-acid chain; its full sequence is Epoxide hydrolase 1 (404 aa).

The helical transmembrane segment at I74–A96 threads the bilayer. In terms of domain architecture, AB hydrolase-1 spans P140–P389. D215 serves as the catalytic Nucleophile. Y327 serves as the catalytic Proton donor. The Proton acceptor role is filled by H382.

It belongs to the AB hydrolase superfamily. Epoxide hydrolase family.

It is found in the membrane. The catalysed reaction is an epoxide + H2O = an ethanediol. It carries out the reaction 8,9-epoxy-(5Z,11Z,14Z)-eicosatrienoate + H2O = 8,9-dihydroxy-(5Z,11Z,14Z)-eicosatrienoate. The enzyme catalyses 11,12-epoxy-(5Z,8Z,14Z)-eicosatrienoate + H2O = 11,12-dihydroxy-(5Z,8Z,14Z)-eicosatrienoate. It catalyses the reaction 14,15-epoxy-(5Z,8Z,11Z)-eicosatrienoate + H2O = 14,15-dihydroxy-(5Z,8Z,11Z)-eicosatrienoate. The catalysed reaction is 12,13-epoxy-(9Z)-octadecenoate + H2O = 12,13-dihydroxy-(9Z)-octadecenoate. It carries out the reaction 9,10-epoxy-(12Z)-octadecenoate + H2O = 9,10-dihydroxy-(12Z)-octadecenoate. The protein operates within lipid metabolism. Functionally, catalyzes the hydrolysis of epoxide-containing fatty acids. Active against epoxyeicosatrienoic acids (EETs) including 8,9-epoxy-(5Z,11Z,14Z)-eicosatrienoate (8,9-EET), 11,12-epoxy-(5Z,8Z,14Z)-eicosatrienoate (11,12-EET) and 14,15-epoxy-(5Z,8Z,11Z)-eicosatrienoate (14,15-EET) and the linoleic acid metabolites 12,13-epoxy-(9Z)-octadecenoate (12,13-EpOME) and 9,10-epoxy-(12Z)-octadecenoate (9,10-EpOME). These epoxides function as lipid signaling molecules, the enzyme can deplete the supply of the epoxide signal by transforming them into diol species that are more readily eliminated through excretion. The sequence is that of Epoxide hydrolase 1 from Caenorhabditis elegans.